The following is a 195-amino-acid chain: Rac-like GTP-binding protein ARAC4 (195 aa).

GTP-binding positions include 12-19, 30-37, 59-63, and 117-120; these read GDGAVGKT, FPTDYVPT, DTAGQ, and TKLD. The short motif at 34 to 42 is the Effector region element; the sequence is YVPTVFDNF. The residue at position 192 (Cys192) is a Cysteine methyl ester. Cys192 is lipidated: S-geranylgeranyl cysteine. A propeptide spans 193 to 195 (removed in mature form); it reads AFL.

The protein belongs to the small GTPase superfamily. Rho family. Interacts with SPK1, ICR1, ICR5 and PIR. In terms of tissue distribution, ubiquitous.

Its subcellular location is the cytoplasm. It localises to the cell membrane. Functionally, inactive GDP-bound Rho GTPases reside in the cytosol, are found in a complex with Rho GDP-dissociation inhibitors (Rho GDIs), and are released from the GDI protein in order to translocate to membranes upon activation. Involved in cell polarity control during the actin-dependent tip growth of root hairs, thus regulating root hair length and root hair initiation. Contributes, in a SPK1-dependent manner, to the prevention of cortical microtubules organization into parallel arrays oriented perpendicular to the axis of cell elongation to limit anisotropic cell growth during petal development. May regulate a WAVE complex that activates the Arp2/3 complex. This Arabidopsis thaliana (Mouse-ear cress) protein is Rac-like GTP-binding protein ARAC4.